The following is a 728-amino-acid chain: Homoaconitase, mitochondrial (728 aa).

Residues 1–24 (MVAIPRLARLSVPAWALSARGRFY) constitute a mitochondrion transit peptide. Cys362, Cys422, and Cys425 together coordinate [4Fe-4S] cluster.

The protein belongs to the aconitase/IPM isomerase family. Requires [4Fe-4S] cluster as cofactor.

Its subcellular location is the mitochondrion. The catalysed reaction is (2R,3S)-homoisocitrate = cis-homoaconitate + H2O. Its pathway is amino-acid biosynthesis; L-lysine biosynthesis via AAA pathway; L-alpha-aminoadipate from 2-oxoglutarate: step 3/5. Its function is as follows. Catalyzes the reversible hydration of cis-homoaconitate to (2R,3S)-homoisocitrate, a step in the alpha-aminoadipate pathway for lysine biosynthesis. The polypeptide is Homoaconitase, mitochondrial (LYS4) (Cryptococcus neoformans var. neoformans serotype D (strain B-3501A) (Filobasidiella neoformans)).